The chain runs to 663 residues: GPI mannosyltransferase 3 (663 aa).

Basic residues predominate over residues 1 to 11; the sequence is MPMSARSRRSN. Residues 1-44 form a disordered region; sequence MPMSARSRRSNPRLPPSPSSSSSSDAVRASPHSSPPSRLRPPSA. Positions 19–42 are enriched in low complexity; that stretch reads SSSSSSDAVRASPHSSPPSRLRPP. 8 consecutive transmembrane segments (helical) span residues 47-67, 110-130, 137-157, 226-246, 269-289, 304-324, 335-355, and 367-387; these read DVSS…ALTV, PLIF…LGLT, LLIA…DFYT, VLAV…FPPL, YASQ…LVGL, GSIL…LSVI, LLPA…IPAL, and LTLI…TLFH. Residues 492-512 form a disordered region; sequence HIPRRPSYATPPSSQRQPTQL. The segment covering 501–511 has biased composition (polar residues); the sequence is TPPSSQRQPTQ.

The protein belongs to the glycosyltransferase 22 family. PIGB subfamily.

The protein localises to the endoplasmic reticulum membrane. It functions in the pathway glycolipid biosynthesis; glycosylphosphatidylinositol-anchor biosynthesis. Mannosyltransferase involved in glycosylphosphatidylinositol-anchor biosynthesis. Transfers the third mannose to Man2-GlcN-acyl-PI during GPI precursor assembly. The protein is GPI mannosyltransferase 3 (gpi10) of Emericella nidulans (strain FGSC A4 / ATCC 38163 / CBS 112.46 / NRRL 194 / M139) (Aspergillus nidulans).